Reading from the N-terminus, the 759-residue chain is uncharacterized protein (759 aa).

One can recognise an MCM domain in the interval 352–556 (VIQKLSDYAF…KDEDIADFSI (205 aa)). An ATP-binding site is contributed by 397–404 (SDPGVGKS).

Belongs to the MCM family.

This is an uncharacterized protein from Methanocaldococcus jannaschii (strain ATCC 43067 / DSM 2661 / JAL-1 / JCM 10045 / NBRC 100440) (Methanococcus jannaschii).